A 93-amino-acid polypeptide reads, in one-letter code: Small ribosomal subunit protein uS19 (93 aa).

This sequence belongs to the universal ribosomal protein uS19 family.

In terms of biological role, protein S19 forms a complex with S13 that binds strongly to the 16S ribosomal RNA. This chain is Small ribosomal subunit protein uS19, found in Mycobacterium tuberculosis (strain ATCC 25177 / H37Ra).